The primary structure comprises 100 residues: ESAT-6-like protein EsxT (100 aa).

Belongs to the WXG100 family. ESAT-6 subfamily. In terms of assembly, forms a tight 1:1 complex with EsxU.

Its subcellular location is the secreted. The polypeptide is ESAT-6-like protein EsxT (Mycobacterium tuberculosis (strain CDC 1551 / Oshkosh)).